A 240-amino-acid polypeptide reads, in one-letter code: MGRAFEVRKAAMAKTAGAKTKVYSKYGKEIYVCAKNGGADPDTNLSLRRLMEKAKKDQVPSHVIEKAIDKAAGGAGEDFQPMRYEGFGPGNCMVIVDCLSDNANRTITEVRNCFTKTNAKLGAQGAVSHMFDHQAVFQFEGDDEDAILEVLMEADVDVTDVEVEDGKVTVYAPHTEFYQVRTALTEAYPDLSFIADEISWMPQTETEISEEDMPMFEKFMDMLNDCDDVQDVYHNAVTPS.

Belongs to the TACO1 family.

It localises to the cytoplasm. The sequence is that of Probable transcriptional regulatory protein MADE_1004275 from Alteromonas mediterranea (strain DSM 17117 / CIP 110805 / LMG 28347 / Deep ecotype).